A 310-amino-acid chain; its full sequence is uncharacterized protein (310 aa).

Residues 1–70 (MAGNSQRRGA…ARGRTDETET (70 aa)) form a disordered region. Positions 49-62 (AAKRAKAQQRRPAR) are enriched in basic residues. S-adenosyl-L-methionine contacts are provided by glycine 262, valine 282, and leucine 291.

This sequence belongs to the class IV-like SAM-binding methyltransferase superfamily. RNA methyltransferase TrmH family.

This is an uncharacterized protein from Mycobacterium marinum (strain ATCC BAA-535 / M).